Here is a 618-residue protein sequence, read N- to C-terminus: UvrABC system protein C (618 aa).

One can recognise a GIY-YIG domain in the interval 13–92 (DKPGVYLMKN…IKKYRPKYNI (80 aa)). The 36-residue stretch at 204-239 (LDIVENFKLNMEKAAENLEFEKAAMLRDKINIIEKI) folds into the UVR domain.

The protein belongs to the UvrC family. As to quaternary structure, interacts with UvrB in an incision complex.

Its subcellular location is the cytoplasm. Its function is as follows. The UvrABC repair system catalyzes the recognition and processing of DNA lesions. UvrC both incises the 5' and 3' sides of the lesion. The N-terminal half is responsible for the 3' incision and the C-terminal half is responsible for the 5' incision. The polypeptide is UvrABC system protein C (Clostridium botulinum (strain Okra / Type B1)).